The chain runs to 299 residues: Pyridoxal 5'-phosphate synthase subunit PdxS (299 aa).

Position 29 (Asp-29) interacts with D-ribose 5-phosphate. Lys-86 (schiff-base intermediate with D-ribose 5-phosphate) is an active-site residue. A D-ribose 5-phosphate-binding site is contributed by Gly-158. Residue Arg-170 participates in D-glyceraldehyde 3-phosphate binding. Residues Gly-219 and 240-241 (GS) each bind D-ribose 5-phosphate.

The protein belongs to the PdxS/SNZ family. In the presence of PdxT, forms a dodecamer of heterodimers.

It catalyses the reaction aldehydo-D-ribose 5-phosphate + D-glyceraldehyde 3-phosphate + L-glutamine = pyridoxal 5'-phosphate + L-glutamate + phosphate + 3 H2O + H(+). It participates in cofactor biosynthesis; pyridoxal 5'-phosphate biosynthesis. Its function is as follows. Catalyzes the formation of pyridoxal 5'-phosphate from ribose 5-phosphate (RBP), glyceraldehyde 3-phosphate (G3P) and ammonia. The ammonia is provided by the PdxT subunit. Can also use ribulose 5-phosphate and dihydroxyacetone phosphate as substrates, resulting from enzyme-catalyzed isomerization of RBP and G3P, respectively. The sequence is that of Pyridoxal 5'-phosphate synthase subunit PdxS from Protochlamydia amoebophila (strain UWE25).